Reading from the N-terminus, the 400-residue chain is Argininosuccinate synthase (400 aa).

Residue 8 to 16 (AYSGGLDTS) coordinates ATP. Residue Tyr87 coordinates L-citrulline. Residue Gly117 participates in ATP binding. L-aspartate-binding residues include Thr119, Asn123, and Asp124. Asn123 provides a ligand contact to L-citrulline. The L-citrulline site is built by Arg127, Ser175, Glu260, and Tyr272.

It belongs to the argininosuccinate synthase family. Type 1 subfamily. As to quaternary structure, homotetramer.

The protein localises to the cytoplasm. It carries out the reaction L-citrulline + L-aspartate + ATP = 2-(N(omega)-L-arginino)succinate + AMP + diphosphate + H(+). It participates in amino-acid biosynthesis; L-arginine biosynthesis; L-arginine from L-ornithine and carbamoyl phosphate: step 2/3. In Nocardia farcinica (strain IFM 10152), this protein is Argininosuccinate synthase.